The following is a 499-amino-acid chain: Heparin cofactor 2 (499 aa).

The N-terminal stretch at 1–19 (MKHSLNALLIFLIITSAWG) is a signal peptide. S37 carries the post-translational modification Phosphoserine; by FAM20C. Residue N49 is glycosylated (N-linked (GlcNAc...) (complex) asparagine). The chemotactic activity stretch occupies residues 68–79 (DWIPEGEEDDDY). 2 repeat units span residues 73–83 (GEEDDDYLDLE) and 87–97 (SEDDDYIDIVD). Residues 73–97 (GEEDDDYLDLEKIFSEDDDYIDIVD) form a 2 X 11 AA approximate repeats, Asp/Glu-rich (acidic) (hirudin-like) region. Residues Y79 and Y92 each carry the sulfotyrosine modification. N-linked (GlcNAc...) asparagine glycosylation is present at N188. Residues 192–212 (KYEITTIHNLFRKLTHRLFRR) form a glycosaminoglycan-binding site region. N387 carries N-linked (GlcNAc...) asparagine glycosylation.

The protein belongs to the serpin family. Phosphorylated by FAM20C in the extracellular medium. As to expression, expressed predominantly in liver. Also present in plasma. In terms of tissue distribution, expressed in plasma (at protein level). Expressed in liver.

Functionally, thrombin inhibitor activated by the glycosaminoglycans, heparin or dermatan sulfate. In the presence of the latter, HC-II becomes the predominant thrombin inhibitor in place of antithrombin III (AT-III). Also inhibits chymotrypsin, but in a glycosaminoglycan-independent manner. Peptides at the N-terminal of HC-II have chemotactic activity for both monocytes and neutrophils. In terms of biological role, shows negligible inhibition, in vitro, of thrombin and tPA and no inhibition of factor Xa, in vitro. This chain is Heparin cofactor 2 (SERPIND1), found in Homo sapiens (Human).